Consider the following 582-residue polypeptide: Eukaryotic translation initiation factor 2A (582 aa).

WD repeat units follow at residues Gly21 to Asn63, Leu73 to Ser124, Pro273 to Phe314, and Thr358 to Tyr402. Residues Asp436–Lys533 are disordered. The stretch at Ser482–Ile580 forms a coiled coil. Residues Lys495–Glu506 are compositionally biased toward basic and acidic residues. Positions Ser510–Ala522 are enriched in polar residues.

The protein belongs to the WD repeat EIF2A family.

Functions in the early steps of protein synthesis of a small number of specific mRNAs. Acts by directing the binding of methionyl-tRNAi to 40S ribosomal subunits. In contrast to the eIF-2 complex, it binds methionyl-tRNAi to 40S subunits in a codon-dependent manner, whereas the eIF-2 complex binds methionyl-tRNAi to 40S subunits in a GTP-dependent manner. The protein is Eukaryotic translation initiation factor 2A (eif2a) of Xenopus laevis (African clawed frog).